Here is a 950-residue protein sequence, read N- to C-terminus: Double-stranded RNA-binding protein Staufen homolog (950 aa).

Disordered regions lie at residues 25–168 (VSGA…QQQQ), 202–274 (QQQL…QPST), and 288–342 (VTPV…NTKE). Residues 31-43 (QQRSMMSQQRGGS) are compositionally biased toward low complexity. Residues 45–66 (AINSSKSPYQLQTSSISQFSHL) are compositionally biased toward polar residues. A compositionally biased stretch (low complexity) spans 67 to 77 (QQQQQQQQQQQ). Residues 78-122 (LVNNYHKQKQMSPDITSHQFSSSTGGGMPTQNGNYQSMSGSSIHT) are compositionally biased toward polar residues. Low complexity-rich tracts occupy residues 130–143 (QLSL…YSSQ), 153–168 (QQHH…QQQQ), and 202–253 (QQQL…ILQH). Over residues 254-274 (SPTSGKSLSSAPHGTSVQPST) the composition is skewed to polar residues. Positions 313–322 (SGRDSVHVSD) are enriched in basic and acidic residues. DRBM domains are found at residues 344-411 (TPMC…ETKC), 435-546 (TPTV…ILKN), 578-645 (SEIS…ELRK), and 690-758 (NPIS…LLGY). Disordered regions lie at residues 758–833 (YTKP…HTAS) and 922–950 (DIHP…DFSK). Polar residues predominate over residues 765–782 (PTKSSFKNPSTGEAGQTN). The segment covering 922 to 937 (DIHPGGDGPQVKKDVL) has biased composition (basic and acidic residues).

Strongly expressed in nervous tissue (at protein level).

Its subcellular location is the perikaryon. The protein resides in the cell projection. Functionally, RNA-binding protein which is required for syntaxin location in sensory neurons during long-term synaptic facilitation. Binds to syntaxin mRNA and is required to maintain its accumulation at the axon hillock following neuronal stimulation and at the opposite pole in stable unstimulated sensory neurons. The chain is Double-stranded RNA-binding protein Staufen homolog from Aplysia californica (California sea hare).